A 509-amino-acid chain; its full sequence is Maturase K (509 aa).

This sequence belongs to the intron maturase 2 family. MatK subfamily.

Its subcellular location is the plastid. It localises to the chloroplast. Functionally, usually encoded in the trnK tRNA gene intron. Probably assists in splicing its own and other chloroplast group II introns. This chain is Maturase K, found in Vachellia farnesiana (Sweet acacia).